The sequence spans 77 residues: Conodipine-M alpha chain (77 aa).

Residue Gln1 is modified to Pyrrolidone carboxylic acid. The active site involves His36.

Heterodimer of an alpha and a beta chains; probably disulfide-linked. It depends on Ca(2+) as a cofactor. Expressed by the venom duct.

It is found in the secreted. The enzyme catalyses a 1,2-diacyl-sn-glycero-3-phosphocholine + H2O = a 1-acyl-sn-glycero-3-phosphocholine + a fatty acid + H(+). Its activity is regulated as follows. Inhibited by linoleoyl amide and MG14. Its function is as follows. Heterodimer: conodipine-M catalyzes the calcium-dependent hydrolysis of the 2-acyl groups in 3-sn-phosphoglycerides. This activity may be supported by the alpha chain. Conodipine-M inhibits the binding of isradipine (a ligand specific for L-type calcium channel) to L-type calcium channels. This is Conodipine-M alpha chain from Conus magus (Magical cone).